A 460-amino-acid chain; its full sequence is MTATEQQQDDFSNVSWSEHVHDQQTRSVPDAEEPGHDMNAPGTGLERDAPSLGNEKLECTVDTPIKENDGTKDAFVSYLITTHSTFSSFQRSTTTVRRRFTDFVFLYKQLTRDYPAAAVPPLPDKQRMEYVRGDRFGSDFTTRRANSLQRFLSRLSLHPTLRRAPILHTFLESPDWNATMRSRGSRVSSASDPGSAGVFDNFADTFINAFTKLHRPDRRFLEVKEKSDKLDDDLGHIEKVIARVARREADLEVDLRDLAEQFQKLIPLEPHVEPAVHGFSASIEDTASHLRKLKDMTDQDYLGSLRDMQAYSIALKNLLKAREQKQLDYEQLTEYLNKSTTERDTLQSGHGGGSGAGSFLRAKIEDVRGVDHEQARRERTRKLELRVEELTHEVESARKTSDMFDDEVVKEVADFERIKRIEMKAQLGSLADSHIEFYGEVASIWEKYVEEMEKQGITSA.

Residues 1 to 16 (MTATEQQQDDFSNVSW) are compositionally biased toward polar residues. Positions 1-53 (MTATEQQQDDFSNVSWSEHVHDQQTRSVPDAEEPGHDMNAPGTGLERDAPSLG) are disordered. The PX domain maps to 56–178 (KLECTVDTPI…TFLESPDWNA (123 aa)). Coiled-coil stretches lie at residues 238–266 (EKVIARVARREADLEVDLRDLAEQFQKLI), 306–337 (RDMQAYSIALKNLLKAREQKQLDYEQLTEYLN), and 374–403 (QARRERTRKLELRVEELTHEVESARKTSDM).

The protein belongs to the sorting nexin family. As to quaternary structure, forms a complex with ATG20 and ATG17.

It localises to the cytoplasm. Its subcellular location is the membrane. It is found in the endosome membrane. Its function is as follows. Sorting nexin involved in the separation or division of vacuoles throughout the entire life cycle of the cells. Involved in retrieval of late-Golgi SNAREs from post-Golgi endosomes to the trans-Golgi network, for cytoplasm to vacuole transport (Cvt), and autophagy of large cargos including mitophagy, pexophagy and glycophagy. Autophagy is required for proper vegetative growth, asexual/sexual reproduction, and full virulence. Autophagy is particularly involved in the biosynthesis of deoxynivalenol (DON), an important virulence determinant. The chain is Sorting nexin-4 from Gibberella zeae (strain ATCC MYA-4620 / CBS 123657 / FGSC 9075 / NRRL 31084 / PH-1) (Wheat head blight fungus).